The following is a 379-amino-acid chain: Protein-glutamate methylesterase/protein-glutamine glutaminase (379 aa).

One can recognise a Response regulatory domain in the interval 4–121 (KILVVDDSIF…AANRQDAVAL (118 aa)). Asp-55 bears the 4-aspartylphosphate mark. A CheB-type methylesterase domain is found at 186 to 379 (SGKKYRCLAI…FESHILKEMA (194 aa)). Residues Ser-198, His-225, and Asp-323 contribute to the active site.

This sequence belongs to the CheB family. In terms of processing, phosphorylated by CheA. Phosphorylation of the N-terminal regulatory domain activates the methylesterase activity.

Its subcellular location is the cytoplasm. It catalyses the reaction [protein]-L-glutamate 5-O-methyl ester + H2O = L-glutamyl-[protein] + methanol + H(+). It carries out the reaction L-glutaminyl-[protein] + H2O = L-glutamyl-[protein] + NH4(+). Involved in chemotaxis. Part of a chemotaxis signal transduction system that modulates chemotaxis in response to various stimuli. Catalyzes the demethylation of specific methylglutamate residues introduced into the chemoreceptors (methyl-accepting chemotaxis proteins or MCP) by CheR. Also mediates the irreversible deamidation of specific glutamine residues to glutamic acid. In Pseudoalteromonas atlantica (strain T6c / ATCC BAA-1087), this protein is Protein-glutamate methylesterase/protein-glutamine glutaminase.